The primary structure comprises 95 residues: Co-chaperonin GroES (95 aa).

Belongs to the GroES chaperonin family. As to quaternary structure, heptamer of 7 subunits arranged in a ring. Interacts with the chaperonin GroEL.

The protein resides in the cytoplasm. Functionally, together with the chaperonin GroEL, plays an essential role in assisting protein folding. The GroEL-GroES system forms a nano-cage that allows encapsulation of the non-native substrate proteins and provides a physical environment optimized to promote and accelerate protein folding. GroES binds to the apical surface of the GroEL ring, thereby capping the opening of the GroEL channel. The chain is Co-chaperonin GroES from Desulfosudis oleivorans (strain DSM 6200 / JCM 39069 / Hxd3) (Desulfococcus oleovorans).